Here is a 761-residue protein sequence, read N- to C-terminus: Pleckstrin homology domain-containing family M member 3 (761 aa).

Serine 132 carries the phosphoserine modification. PH domains follow at residues 211–308 (NILK…EVVH) and 361–456 (NILK…IAAN). Residues 669–722 (SHVYSCSLCSQKGFICEICNNGEILYPFEDISTSRCESCGAVFHSECKEKSVPC) form a Phorbol-ester/DAG-type zinc finger.

In terms of assembly, interacts with AKT1.

It localises to the cytoplasm. The protein localises to the golgi apparatus. It is found in the cell membrane. Its function is as follows. Involved in skeletal muscle differentiation. May act as a scaffold protein for AKT1 during muscle differentiation. The protein is Pleckstrin homology domain-containing family M member 3 of Homo sapiens (Human).